A 481-amino-acid polypeptide reads, in one-letter code: Cardiolipin synthase A (481 aa).

2 helical membrane-spanning segments follow: residues 10–30 and 40–60; these read FFGYLLGLIHLLGVVAALHAL and IAWAMPLFFIPYLTLIPYLIF. PLD phosphodiesterase domains are found at residues 220–247 and 394–421; these read VNFRNHRKIVVVDGLLGFIGGHNVGDEY and QPGFLHQKVVLVDDEVSAIGSANLDNRS. Catalysis depends on residues histidine 225, lysine 227, aspartate 232, histidine 399, lysine 401, and aspartate 406.

Belongs to the phospholipase D family. Cardiolipin synthase subfamily. ClsA sub-subfamily.

It localises to the cell inner membrane. The catalysed reaction is 2 a 1,2-diacyl-sn-glycero-3-phospho-(1'-sn-glycerol) = a cardiolipin + glycerol. Functionally, catalyzes the reversible phosphatidyl group transfer from one phosphatidylglycerol molecule to another to form cardiolipin (CL) (diphosphatidylglycerol) and glycerol. The sequence is that of Cardiolipin synthase A from Pseudomonas putida (Arthrobacter siderocapsulatus).